The chain runs to 1035 residues: Alpha-mannosidase B (1035 aa).

Positions 1-20 (MGKVLILFLFVLLLITFINC) are cleaved as a signal peptide. N-linked (GlcNAc...) asparagine glycosylation is found at asparagine 19 and asparagine 30. Residues histidine 47 and aspartate 49 each contribute to the Zn(2+) site. An N-linked (GlcNAc...) asparagine glycan is attached at asparagine 63. Aspartate 161 lines the Zn(2+) pocket. The Nucleophile role is filled by aspartate 161. Residues asparagine 245, asparagine 250, asparagine 270, asparagine 309, asparagine 327, and asparagine 438 are each glycosylated (N-linked (GlcNAc...) asparagine). Position 446 (histidine 446) interacts with Zn(2+). Residues asparagine 487, asparagine 497, asparagine 503, asparagine 710, asparagine 719, asparagine 735, asparagine 792, asparagine 852, asparagine 863, asparagine 880, asparagine 962, and asparagine 993 are each glycosylated (N-linked (GlcNAc...) asparagine).

This sequence belongs to the glycosyl hydrolase 38 family. It depends on Zn(2+) as a cofactor.

Its subcellular location is the secreted. The catalysed reaction is Hydrolysis of terminal, non-reducing alpha-D-mannose residues in alpha-D-mannosides.. The sequence is that of Alpha-mannosidase B (manB) from Dictyostelium discoideum (Social amoeba).